A 301-amino-acid polypeptide reads, in one-letter code: 4-hydroxybenzoate octaprenyltransferase (301 aa).

Transmembrane regions (helical) follow at residues 34–54, 57–77, 108–128, 163–183, 222–242, 248–268, and 280–300; these read IGSL…AGGL, LWTL…GCVI, LWVF…LNWL, WGIP…AWLL, DLIA…LVGL, IAYW…FHIA, and FLHN…SLAL.

This sequence belongs to the UbiA prenyltransferase family. The cofactor is Mg(2+).

The protein localises to the cell inner membrane. It carries out the reaction all-trans-octaprenyl diphosphate + 4-hydroxybenzoate = 4-hydroxy-3-(all-trans-octaprenyl)benzoate + diphosphate. It participates in cofactor biosynthesis; ubiquinone biosynthesis. Functionally, catalyzes the prenylation of para-hydroxybenzoate (PHB) with an all-trans polyprenyl group. Mediates the second step in the final reaction sequence of ubiquinone-8 (UQ-8) biosynthesis, which is the condensation of the polyisoprenoid side chain with PHB, generating the first membrane-bound Q intermediate 3-octaprenyl-4-hydroxybenzoate. This chain is 4-hydroxybenzoate octaprenyltransferase, found in Xanthomonas campestris pv. campestris (strain 8004).